The following is a 327-amino-acid chain: Probable cell division protein WhiA (327 aa).

The segment at residues 275–308 is a DNA-binding region (H-T-H motif); that stretch reads SLEELGRLADPQMTKDAVAGRIRRLLTTADKRAR.

This sequence belongs to the WhiA family.

Functionally, involved in cell division and chromosome segregation. This is Probable cell division protein WhiA from Corynebacterium efficiens (strain DSM 44549 / YS-314 / AJ 12310 / JCM 11189 / NBRC 100395).